The sequence spans 472 residues: Carboxypeptidase E (472 aa).

An N-terminal signal peptide occupies residues 1–21 (MLHAMRPVLLVAALLAVTAHA). The Peptidase M14 domain occupies 39-359 (HYHNQAQLEA…KSIFEYVWKS (321 aa)). Zn(2+) is bound by residues His101 and Glu104. A glycan (N-linked (GlcNAc...) asparagine) is linked at Asn134. Residue His232 coordinates Zn(2+). The Proton donor/acceptor role is filled by Glu329. 2 N-linked (GlcNAc...) asparagine glycosylation sites follow: Asn385 and Asn428.

This sequence belongs to the peptidase M14 family. The cofactor is Zn(2+). As to expression, expression is restricted to the nervous system.

The protein localises to the cell projection. It is found in the axon. It localises to the perikaryon. Its subcellular location is the cytoplasmic vesicle. The protein resides in the secretory vesicle lumen. It carries out the reaction Release of C-terminal arginine or lysine residues from polypeptides.. Functionally, during FMRFamide-like peptide (FaRPs or FLP) and neuropeptide-like protein (NLP) precursor processing, catalyzes the removal of Arg or Lys residues from the C-terminus following the initial endoprotease cleavage. By processing neuropeptides, modulates basal acetylcholine release at the ventral cord neuromuscular junctions. Involved in egg-laying, defecation and locomotion. By processing FLP neuropeptides, regulates the turning step of male mating behavior. Involved in reducing pharyngeal pumping in response to high CO(2) levels. This is Carboxypeptidase E from Caenorhabditis elegans.